The chain runs to 139 residues: D-ribose pyranase (139 aa).

The active-site Proton donor is the His-20. Substrate contacts are provided by residues Asp-28, His-106, and 128 to 130; that span reads FAN.

Belongs to the RbsD / FucU family. RbsD subfamily. As to quaternary structure, homodecamer.

It is found in the cytoplasm. The enzyme catalyses beta-D-ribopyranose = beta-D-ribofuranose. It functions in the pathway carbohydrate metabolism; D-ribose degradation; D-ribose 5-phosphate from beta-D-ribopyranose: step 1/2. Catalyzes the interconversion of beta-pyran and beta-furan forms of D-ribose. The sequence is that of D-ribose pyranase from Klebsiella pneumoniae (strain 342).